A 468-amino-acid chain; its full sequence is Cysteine--tRNA ligase (468 aa).

Cysteine 36 serves as a coordination point for Zn(2+). The 'HIGH' region motif lies at 38-48 (PTVYNRSHIGN). 3 residues coordinate Zn(2+): cysteine 216, histidine 241, and glutamate 245. The short motif at 274-278 (KMSKS) is the 'KMSKS' region element. Lysine 277 contributes to the ATP binding site.

Belongs to the class-I aminoacyl-tRNA synthetase family. As to quaternary structure, monomer. It depends on Zn(2+) as a cofactor.

The protein resides in the cytoplasm. It catalyses the reaction tRNA(Cys) + L-cysteine + ATP = L-cysteinyl-tRNA(Cys) + AMP + diphosphate. The sequence is that of Cysteine--tRNA ligase from Parvibaculum lavamentivorans (strain DS-1 / DSM 13023 / NCIMB 13966).